The following is a 920-amino-acid chain: 2-oxoglutarate dehydrogenase E1 component (920 aa).

This sequence belongs to the alpha-ketoglutarate dehydrogenase family. Homodimer. Part of the 2-oxoglutarate dehydrogenase (OGDH) complex composed of E1 (2-oxoglutarate dehydrogenase), E2 (dihydrolipoamide succinyltransferase) and E3 (dihydrolipoamide dehydrogenase); the complex contains multiple copies of the three enzymatic components (E1, E2 and E3). It depends on thiamine diphosphate as a cofactor.

The catalysed reaction is N(6)-[(R)-lipoyl]-L-lysyl-[protein] + 2-oxoglutarate + H(+) = N(6)-[(R)-S(8)-succinyldihydrolipoyl]-L-lysyl-[protein] + CO2. Its function is as follows. E1 component of the 2-oxoglutarate dehydrogenase (OGDH) complex which catalyzes the decarboxylation of 2-oxoglutarate, the first step in the conversion of 2-oxoglutarate to succinyl-CoA and CO(2). The polypeptide is 2-oxoglutarate dehydrogenase E1 component (Leptospira interrogans serogroup Icterohaemorrhagiae serovar copenhageni (strain Fiocruz L1-130)).